The sequence spans 556 residues: Dihydroxy-acid dehydratase (556 aa).

A Mg(2+)-binding site is contributed by Asp-78. Cys-119 contributes to the [2Fe-2S] cluster binding site. The Mg(2+) site is built by Asp-120 and Lys-121. Lys-121 carries the N6-carboxylysine modification. Cys-191 lines the [2Fe-2S] cluster pocket. Glu-442 is a Mg(2+) binding site. The active-site Proton acceptor is Ser-468.

This sequence belongs to the IlvD/Edd family. As to quaternary structure, homodimer. Requires [2Fe-2S] cluster as cofactor. Mg(2+) serves as cofactor.

The enzyme catalyses (2R)-2,3-dihydroxy-3-methylbutanoate = 3-methyl-2-oxobutanoate + H2O. The catalysed reaction is (2R,3R)-2,3-dihydroxy-3-methylpentanoate = (S)-3-methyl-2-oxopentanoate + H2O. The protein operates within amino-acid biosynthesis; L-isoleucine biosynthesis; L-isoleucine from 2-oxobutanoate: step 3/4. It participates in amino-acid biosynthesis; L-valine biosynthesis; L-valine from pyruvate: step 3/4. In terms of biological role, functions in the biosynthesis of branched-chain amino acids. Catalyzes the dehydration of (2R,3R)-2,3-dihydroxy-3-methylpentanoate (2,3-dihydroxy-3-methylvalerate) into 2-oxo-3-methylpentanoate (2-oxo-3-methylvalerate) and of (2R)-2,3-dihydroxy-3-methylbutanoate (2,3-dihydroxyisovalerate) into 2-oxo-3-methylbutanoate (2-oxoisovalerate), the penultimate precursor to L-isoleucine and L-valine, respectively. In Caldanaerobacter subterraneus subsp. tengcongensis (strain DSM 15242 / JCM 11007 / NBRC 100824 / MB4) (Thermoanaerobacter tengcongensis), this protein is Dihydroxy-acid dehydratase.